The primary structure comprises 121 residues: Small ribosomal subunit protein uS13 (121 aa).

Residues 91 to 121 (HRRGLPVRGQNTKNNARTRKGKKASMAGKKK) form a disordered region. The span at 106–121 (ARTRKGKKASMAGKKK) shows a compositional bias: basic residues.

It belongs to the universal ribosomal protein uS13 family. As to quaternary structure, part of the 30S ribosomal subunit. Forms a loose heterodimer with protein S19. Forms two bridges to the 50S subunit in the 70S ribosome.

Functionally, located at the top of the head of the 30S subunit, it contacts several helices of the 16S rRNA. In the 70S ribosome it contacts the 23S rRNA (bridge B1a) and protein L5 of the 50S subunit (bridge B1b), connecting the 2 subunits; these bridges are implicated in subunit movement. Contacts the tRNAs in the A and P-sites. This is Small ribosomal subunit protein uS13 from Lacticaseibacillus paracasei (strain ATCC 334 / BCRC 17002 / CCUG 31169 / CIP 107868 / KCTC 3260 / NRRL B-441) (Lactobacillus paracasei).